The chain runs to 235 residues: N-alpha-acetyltransferase 10 (235 aa).

Residue Met1 is modified to N-acetylmethionine. Residues 1 to 58 (MNIRNARPEDLMNMQHCNLLCLPENYQMKYYFYHGLSWPQLSYIAEDENGKIVGYVLA) form an interaction with NAA15 region. The region spanning 1 to 152 (MNIRNARPED…DAYAMKRDLT (152 aa)) is the N-acetyltransferase domain. Position 136 is an N6-acetyllysine; by autocatalysis (Lys136). The tract at residues 178–235 (NKVESKGNSPPSSGEACREEKGLAAEDSGGDSKDLSEVSETTESTDVKDSSEASDSAS) is disordered. Phosphoserine occurs at positions 182, 186, and 205. Basic and acidic residues predominate over residues 193 to 213 (ACREEKGLAAEDSGGDSKDLS). At Ser209 the chain carries Phosphoserine; by IKKB. Phosphoserine occurs at positions 213 and 216.

This sequence belongs to the acetyltransferase family. ARD1 subfamily. Component of the N-terminal acetyltransferase A complex (also called the NatA complex) composed of NAA10 and NAA15. Within the complex interacts with NAA15. Component of the N-terminal acetyltransferase A (NatA)/HYPK complex at least composed of NAA10, NAA15 and HYPK, which has N-terminal acetyltransferase activity. In complex with NAA15, interacts with HYPK. Component of the N-terminal acetyltransferase E (NatE) complex at least composed of NAA10, NAA15 and NAA50. Within the complex interacts with NAA15; the interaction is required for binding to NAAT50. Interacts with NAAT50. The interaction of the NatA complex with NAA50 reduces the acetylation activity of the NatA complex. Component of the N-terminal acetyltransferase E (NatE)/HYPK complex at least composed of NAA10, NAA15, NAA50 and HYPK. In complex with NAA15, interacts with HYPK; the interaction with HYPK reduces the capacity of the NatA complex to interact with NAA50. Interacts with HIF1A (via its ODD domain); the interaction increases HIF1A protein stability during normoxia, an down-regulates it when induced by hypoxia. Interacts with the ribosome. Binds to MYLK. Interacts with NAA16. Interacts (via its C-terminal domain) with TSC2, leading to its acetylation. Interacts with IKBKB. Interacts with HSPA1A and HSPA1B leading to its acetylation. Post-translationally, cleaved by caspases during apoptosis. In terms of processing, phosphorylation by IKBKB/IKKB at Ser-209 promotes its proteasome-mediated degradation. Autoacetylated at Lys-136 which stimulates its catalytic activity. Ubiquitous.

It localises to the cytoplasm. The protein localises to the nucleus. It carries out the reaction N-terminal glycyl-[protein] + acetyl-CoA = N-terminal N(alpha)-acetylglycyl-[protein] + CoA + H(+). The enzyme catalyses N-terminal L-alanyl-[protein] + acetyl-CoA = N-terminal N(alpha)-acetyl-L-alanyl-[protein] + CoA + H(+). The catalysed reaction is N-terminal L-seryl-[protein] + acetyl-CoA = N-terminal N(alpha)-acetyl-L-seryl-[protein] + CoA + H(+). It catalyses the reaction N-terminal L-valyl-[protein] + acetyl-CoA = N-terminal N(alpha)-acetyl-L-valyl-[protein] + CoA + H(+). It carries out the reaction N-terminal L-cysteinyl-[protein] + acetyl-CoA = N-terminal N(alpha)-acetyl-L-cysteinyl-[protein] + CoA + H(+). The enzyme catalyses N-terminal L-threonyl-[protein] + acetyl-CoA = N-terminal N(alpha)-acetyl-L-threonyl-[protein] + CoA + H(+). Its function is as follows. Catalytic subunit of N-terminal acetyltransferase complexes which display alpha (N-terminal) acetyltransferase activity. Acetylates amino termini that are devoid of initiator methionine. The alpha (N-terminal) acetyltransferase activity may be important for vascular, hematopoietic and neuronal growth and development. Without NAA15, displays epsilon (internal) acetyltransferase activity towards HIF1A, thereby promoting its degradation. Represses MYLK kinase activity by acetylation, and thus represses tumor cell migration. Acetylates, and stabilizes TSC2, thereby repressing mTOR activity and suppressing cancer development. Acetylates HSPA1A and HSPA1B at 'Lys-77' which enhances its chaperone activity and leads to preferential binding to co-chaperone HOPX. Acetylates HIST1H4A. Acts as a negative regulator of sister chromatid cohesion during mitosis. In Homo sapiens (Human), this protein is N-alpha-acetyltransferase 10 (NAA10).